The primary structure comprises 378 residues: Copper-containing nitrite reductase (378 aa).

A signal peptide (tat-type signal) is located at residues 1–38 (MTEQLQMTRRTMLAGAALAGAVAPLLHTAQAHAAGAAA). Plastocyanin-like domains lie at 39-213 (AAGA…YDKI) and 214-378 (YYVG…PASM). The Cu cation site is built by histidine 133, histidine 138, histidine 173, cysteine 174, histidine 183, methionine 188, and histidine 344.

The protein belongs to the multicopper oxidase family. As to quaternary structure, homotrimer. Cu(+) is required as a cofactor. Cu(2+) serves as cofactor. It depends on FAD as a cofactor. In terms of processing, predicted to be exported by the Tat system. The position of the signal peptide cleavage has been experimentally proven.

The protein resides in the periplasm. The catalysed reaction is nitric oxide + Fe(III)-[cytochrome c] + H2O = Fe(II)-[cytochrome c] + nitrite + 2 H(+). It participates in nitrogen metabolism; nitrate reduction (denitrification); dinitrogen from nitrate: step 2/4. This Achromobacter cycloclastes protein is Copper-containing nitrite reductase (nirK).